Here is a 528-residue protein sequence, read N- to C-terminus: Low affinity inorganic phosphate transporter 4 (528 aa).

At 1-18 the chain is on the cytoplasmic side; that stretch reads MALEVLEALDSARTQWYH. The helical transmembrane segment at 19–39 threads the bilayer; that stretch reads VTAIVIAGMGFFTDAYDLFCI. The Extracellular portion of the chain corresponds to 40–68; that stretch reads TTVSKLLGRLYYFDPSTGKPGKLPNNVNN. Residues 69–89 form a helical membrane-spanning segment; that stretch reads LVTGVALVGTLSGQLFFGYLG. Topologically, residues 90–96 are cytoplasmic; that stretch reads DKLGRKK. Residues 97–117 traverse the membrane as a helical segment; the sequence is VYGVTLILMVACAICSGLSFG. Residues 118–122 lie on the Extracellular side of the membrane; it reads ASAKS. The helical transmembrane segment at 123-143 threads the bilayer; sequence VMGTLCFFRFWLGFGIGGDYP. Residues 144 to 158 are Cytoplasmic-facing; it reads LSATIMSEYANKRTR. A helical transmembrane segment spans residues 159-179; the sequence is GAFIAAVFAMQGVGIIFAGLV. Residues 180–208 lie on the Extracellular side of the membrane; sequence SMCLSAGFKASYHAPSFHDDPIMSTQPQG. Residues 209–229 form a helical membrane-spanning segment; it reads DLMWRLVLMIGAVPAAMTYYW. Over 230–292 the chain is Cytoplasmic; the sequence is RMKMPETGRY…NEFFTRHGRH (63 aa). The chain crosses the membrane as a helical span at residues 293–313; that stretch reads LIGTMTSWFLLDIAFYSQNLT. Residues 314 to 341 are Extracellular-facing; it reads QKDIFPAMGLIDKDFEMNAIQEVFETSR. Residues 342–362 traverse the membrane as a helical segment; that stretch reads AMFVIALFGTFPGYWFTVFFI. Residues 363-371 are Cytoplasmic-facing; that stretch reads EKLGRYKIQ. The chain crosses the membrane as a helical span at residues 372–392; that stretch reads LIGFFMMSVFMFIIGVKYDYL. Over 393–401 the chain is Extracellular; the sequence is RNENSHMFA. Residues 402-422 form a helical membrane-spanning segment; the sequence is LLYGLTFFFANFGPNSTTFVL. The Cytoplasmic portion of the chain corresponds to 423 to 433; that stretch reads PAELFPTRVRS. Residues 434–454 traverse the membrane as a helical segment; it reads TCHALSAAAGKAGAMVGAFGI. Residues 455-467 lie on the Extracellular side of the membrane; the sequence is QNYTQKGEQKQIK. N-linked (GlcNAc...) asparagine glycosylation is present at Asn456. The helical transmembrane segment at 468 to 488 threads the bilayer; that stretch reads HAMMILAVTNLIGFFCSFLVT. Residues 489-528 lie on the Cytoplasmic side of the membrane; sequence ETKGRSLEEISGEDGRESELTPTPPNNRVPTRQEPRSETM. 2 stretches are compositionally biased toward basic and acidic residues: residues 496–507 and 519–528; these read EEISGEDGRESE and TRQEPRSETM. The disordered stretch occupies residues 496-528; it reads EEISGEDGRESELTPTPPNNRVPTRQEPRSETM.

The protein belongs to the major facilitator superfamily. Phosphate:H(+) symporter (TC 2.A.1.9) family. As to expression, expressed only in mycorrhizal roots, exclusively in cortical cells containing arbuscules, upon arbuscular mycorrhizal (AM) symbiosis with AM fungi (e.g. Gigaspora margarita and Funnelliformis mosseae). Also observed in root tips of non-mycorrhizal roots, in a phosphate (Pi) depended-manner, highest expression levels being observed in low Pi conditions.

The protein localises to the cell membrane. The catalysed reaction is phosphate(in) + H(+)(in) = phosphate(out) + H(+)(out). Its function is as follows. Low-affinity transporter for external inorganic phosphate (Pi) probably involved in the acquisition of phosphate released by arbuscular mycorrhizal (AM) fungi (e.g. Gigaspora margarita and Funnelliformis mosseae) during AM symbiosis; required for propper mycorrhizal arbuscule morphology. Acts as a Pi-sensing machinery at the root tip level, independently of AM fungi, involved in the regulation of early root branching and lateral roots formation. This is Low affinity inorganic phosphate transporter 4 from Lotus japonicus (Lotus corniculatus var. japonicus).